A 367-amino-acid polypeptide reads, in one-letter code: tRNA (cytosine(34)-C(5))-methyltransferase, mitochondrial (367 aa).

Residues 170-176, Glu-193, Asp-224, and Asp-242 contribute to the S-adenosyl-L-methionine site; that span reads CAAPGGK. Cys-296 functions as the Nucleophile in the catalytic mechanism.

This sequence belongs to the class I-like SAM-binding methyltransferase superfamily. RsmB/NOP family.

It is found in the mitochondrion matrix. The catalysed reaction is cytidine(34) in mitochondrial tRNA + S-adenosyl-L-methionine = 5-methylcytidine(34) in mitochondrial tRNA + S-adenosyl-L-homocysteine + H(+). In terms of biological role, mitochondrial tRNA methyltransferase that mediates methylation of cytosine to 5-methylcytosine (m5C) at position 34 of mt-tRNA(Met). mt-tRNA(Met) methylation at cytosine(34) takes place at the wobble position of the anticodon and initiates the formation of 5-formylcytosine (f(5)c) at this position. mt-tRNA(Met) containing the f(5)c modification at the wobble position enables recognition of the AUA codon in addition to the AUG codon, expanding codon recognition in mitochondrial translation. This chain is tRNA (cytosine(34)-C(5))-methyltransferase, mitochondrial, found in Danio rerio (Zebrafish).